A 232-amino-acid polypeptide reads, in one-letter code: U2 small nuclear ribonucleoprotein B'' (232 aa).

In terms of domain architecture, RRM 1 spans 10 to 89 (QTVYLRNLNE…KRMRVQYAKT (80 aa)). The interval 90-159 (RSDCLATEDG…QEPPAPPNNI (70 aa)) is disordered. Over residues 108-123 (KKQEEKAAEKKRRAEE) the composition is skewed to basic and acidic residues. The segment covering 127–151 (SGPNAAAQSNGTGYQASRLGKTSQE) has biased composition (polar residues). The region spanning 158–232 (NILFIQNLPA…NPMAISYAKK (75 aa)) is the RRM 2 domain.

It belongs to the RRM U1 A/B'' family. As to quaternary structure, component of the spliceosome where it is associated with snRNP U2.

The protein resides in the nucleus. It is found in the cajal body. Its subcellular location is the nucleoplasm. It localises to the cytoplasm. Involved in nuclear pre-mRNA splicing. The polypeptide is U2 small nuclear ribonucleoprotein B'' (Oryza sativa subsp. japonica (Rice)).